Consider the following 258-residue polypeptide: Regulatory protein RecX (258 aa).

This sequence belongs to the RecX family.

Its subcellular location is the cytoplasm. Functionally, modulates RecA activity. The protein is Regulatory protein RecX of Streptococcus thermophilus (strain ATCC BAA-491 / LMD-9).